The following is a 1023-amino-acid chain: Sodium/potassium-transporting ATPase subunit alpha-1 (1023 aa).

Residues 1 to 5 (MGKGV) constitute a propeptide that is removed on maturation. Basic and acidic residues predominate over residues 1-11 (MGKGVGRDKYE). Residues 1-39 (MGKGVGRDKYEPAAVSEHGDKKGKKAKKERDMDELKKEV) form a disordered region. Topologically, residues 6-96 (GRDKYEPAAV…PEWVKFCRQL (91 aa)) are cytoplasmic. At lysine 9 the chain carries N6-acetyllysine. Tyrosine 10 is subject to Phosphotyrosine. Serine 16 is modified (phosphoserine). Position 21 is an N6-acetyllysine (lysine 21). Positions 28 to 39 (KERDMDELKKEV) are enriched in basic and acidic residues. Residues serine 40 and serine 47 each carry the phosphoserine modification. The segment at 82–84 (PPP) is phosphoinositide-3 kinase binding. The chain crosses the membrane as a helical span at residues 97–117 (FGGFSMLLWIGAILCFLAYGI). Over 118–129 (RSATEEEPPNDD) the chain is Extracellular. Residues 130-150 (LYLGVVLSAVVIITGCFSYYQ) traverse the membrane as a helical segment. Over 151–291 (EAKSSKIMES…TPIAEEIEHF (141 aa)) the chain is Cytoplasmic. The disordered stretch occupies residues 216–235 (SSLTGESEPQTRSPDFTNEN). A Phosphoserine modification is found at serine 228. A Phosphotyrosine modification is found at tyrosine 260. A helical transmembrane segment spans residues 292-312 (IHLITGVAVFLGVSFFILSLI). Residues 313–319 (LEYTWLE) lie on the Extracellular side of the membrane. Residues 320–340 (AVIFLIGIIVANVPEGLLATV) form a helical membrane-spanning segment. Over 341 to 775 (TVCLTLTAKR…RLIFDNLKKS (435 aa)) the chain is Cytoplasmic. The 4-aspartylphosphate intermediate role is filled by aspartate 376. Serine 452 and serine 484 each carry phosphoserine. Lysine 487 contacts ATP. Phosphotyrosine is present on tyrosine 542. The mediates interaction with SCN7A stretch occupies residues 596–717 (RAAVPDAVGK…QGAIVAVTGD (122 aa)). Lysine 661 is modified (N6-succinyllysine). Phosphoserine is present on residues serine 668 and serine 675. Residues aspartate 717 and aspartate 721 each contribute to the Mg(2+) site. A helical membrane pass occupies residues 776 to 798 (IAYTLTSNIPEITPFLIFIIANI). Over 799-801 (PLP) the chain is Extracellular. A helical transmembrane segment spans residues 802–824 (LGTVTILCIDLGTDMVPAISLAY). At 825 to 849 (EQAESDIMKRQPRNPKTDKLVNERL) the chain is on the cytoplasmic side. A helical transmembrane segment spans residues 850–872 (ISMAYGQIGMIQALGGFFTYFVI). Residues 873 to 915 (LAENGFLPFHLLGIRETWDDRWVNDVEDSYGQQWTYEQRKIVE) lie on the Extracellular side of the membrane. Residues 916–936 (FTCHTAFFVSIVVVQWADLVI) form a helical membrane-spanning segment. Over 937–952 (CKTRRNSVFQQGMKNK) the chain is Cytoplasmic. Position 943 is a phosphoserine; by PKA (serine 943). The helical transmembrane segment at 953-973 (ILIFGLFEETALAAFLSYCPG) threads the bilayer. Residues 974–979 (MGAALR) lie on the Extracellular side of the membrane. The chain crosses the membrane as a helical span at residues 980 to 1000 (MYPLKPTWWFCAFPYSLLIFV). Residues 1001–1023 (YDEVRKLIIRRRPGGWVEKETYY) lie on the Cytoplasmic side of the membrane.

Belongs to the cation transport ATPase (P-type) (TC 3.A.3) family. Type IIC subfamily. In terms of assembly, the sodium/potassium-transporting ATPase is composed of a catalytic alpha subunit, an auxiliary non-catalytic beta subunit and an additional regulatory subunit. Interacts with regulatory subunit FXYD1. Interacts with regulatory subunit FXYD3. Interacts with SIK1. Interacts with SLC35G1 and STIM1. Interacts with CLN3; this interaction regulates the sodium/potassium-transporting ATPase complex localization at the plasma membrane. Interacts with SCN7A; activates ATP1A1 P-type sodium:potassium-exchanging transporter activity which indirectly signals to nearby neurons to regulate sodium homeostasis. Phosphorylation on Tyr-10 modulates pumping activity. Phosphorylation of Ser-943 by PKA modulates the response of ATP1A1 to PKC. Dephosphorylation by protein phosphatase 2A (PP2A) following increases in intracellular sodium, leading to increase catalytic activity.

The protein localises to the cell membrane. It localises to the basolateral cell membrane. The protein resides in the sarcolemma. It is found in the cell projection. Its subcellular location is the axon. The protein localises to the melanosome. It catalyses the reaction K(+)(out) + Na(+)(in) + ATP + H2O = K(+)(in) + Na(+)(out) + ADP + phosphate + H(+). In terms of biological role, this is the catalytic component of the active enzyme, which catalyzes the hydrolysis of ATP coupled with the exchange of sodium and potassium ions across the plasma membrane. This action creates the electrochemical gradient of sodium and potassium ions, providing the energy for active transport of various nutrients. Could also be part of an osmosensory signaling pathway that senses body-fluid sodium levels and controls salt intake behavior as well as voluntary water intake to regulate sodium homeostasis. The chain is Sodium/potassium-transporting ATPase subunit alpha-1 (Atp1a1) from Mus musculus (Mouse).